Reading from the N-terminus, the 860-residue chain is Leucine--tRNA ligase (860 aa).

A 'HIGH' region motif is present at residues 42-52 (PYPSGRLHMGH). The 'KMSKS' region motif lies at 619–623 (KMSKS). K622 provides a ligand contact to ATP.

It belongs to the class-I aminoacyl-tRNA synthetase family.

The protein localises to the cytoplasm. It catalyses the reaction tRNA(Leu) + L-leucine + ATP = L-leucyl-tRNA(Leu) + AMP + diphosphate. The polypeptide is Leucine--tRNA ligase (Salmonella enteritidis PT4 (strain P125109)).